The chain runs to 124 residues: Transcription initiation factor IIA subunit 2 (124 aa).

It belongs to the TFIIA subunit 2 family. In terms of assembly, TFIIA is a heterodimer composed of the large TOA1 and the small TOA2 subunits.

Its subcellular location is the nucleus. TFIIA is a component of the transcription machinery of RNA polymerase II and plays an important role in transcriptional activation. TFIIA in a complex with tbp mediates transcriptional activity. The sequence is that of Transcription initiation factor IIA subunit 2 (TOA2) from Cryptococcus neoformans var. neoformans serotype D (strain JEC21 / ATCC MYA-565) (Filobasidiella neoformans).